A 292-amino-acid polypeptide reads, in one-letter code: MSKISAKLVKELRDRTGLGMMECKKALEETNGDVEQAIDNLRKSGQAKAAKKAGNIAADGAIVIAQEGNKAILLEVNCQTDFVAKDDNFTEFANKVAELALANNTTDVAAISELDYGNGQSVEEARVALVQKIGENIQVRRAKIIEGDNLASYRHGLRIGVVVSSEGGQEDSGKNLAMHIAAFNPVAVNDTDVPADILAREKDIAEAKARESGKPDNIIEKMIEGGLRKYLDEVVLVRQAYVMDNEKKVGDVLKADGVTVKDFVRFEVGEGIEKKQEDFAAEVAAAQAAAAQ.

The tract at residues 80–83 (TDFV) is involved in Mg(2+) ion dislocation from EF-Tu.

The protein belongs to the EF-Ts family.

It is found in the cytoplasm. In terms of biological role, associates with the EF-Tu.GDP complex and induces the exchange of GDP to GTP. It remains bound to the aminoacyl-tRNA.EF-Tu.GTP complex up to the GTP hydrolysis stage on the ribosome. In Psychrobacter sp. (strain PRwf-1), this protein is Elongation factor Ts.